Consider the following 375-residue polypeptide: Eukaryotic translation initiation factor 3 subunit F (375 aa).

An MPN domain is found at 30–166; the sequence is VVIQPQALFS…TRAYISAPVG (137 aa). Residues 307-375 are disordered; the sequence is LGGESGSGES…EAQNGKEEKK (69 aa). The segment covering 323–332 has biased composition (gly residues); sequence QRGGKGGRGG. Basic and acidic residues-rich tracts occupy residues 336-345 and 358-375; these read TQERSGEEAR and RSYEERTNEAQNGKEEKK.

It belongs to the eIF-3 subunit F family. As to quaternary structure, component of the eukaryotic translation initiation factor 3 (eIF-3) complex.

Its subcellular location is the cytoplasm. Component of the eukaryotic translation initiation factor 3 (eIF-3) complex, which is involved in protein synthesis of a specialized repertoire of mRNAs and, together with other initiation factors, stimulates binding of mRNA and methionyl-tRNAi to the 40S ribosome. The eIF-3 complex specifically targets and initiates translation of a subset of mRNAs involved in cell proliferation. The chain is Eukaryotic translation initiation factor 3 subunit F from Aspergillus niger (strain ATCC MYA-4892 / CBS 513.88 / FGSC A1513).